The sequence spans 363 residues: Beta-1,3-N-acetylglucosaminyltransferase lunatic fringe (363 aa).

The Cytoplasmic portion of the chain corresponds to 1-8 (MLKSCGRK). Residues 9 to 29 (LLLSLVGSMFTCLLVLMVEPP) form a helical; Signal-anchor for type II membrane protein membrane-spanning segment. At 30–363 (GRPGLARGEA…TPWCPSNVVY (334 aa)) the chain is on the lumenal side. Arg113 provides a ligand contact to substrate. N-linked (GlcNAc...) asparagine glycosylation is present at Asn151. Intrachain disulfides connect Cys152/Cys163 and Cys181/Cys244. Asp185 provides a ligand contact to substrate. Asp186 lines the Mn(2+) pocket. Asp274 is an active-site residue. Residue His298 coordinates Mn(2+). Cysteines 348 and 357 form a disulfide.

It belongs to the glycosyltransferase 31 family. The cofactor is Mn(2+). Co(2+) is required as a cofactor. A soluble form may be derived from the membrane form by proteolytic processing.

The protein localises to the golgi apparatus membrane. It catalyses the reaction 3-O-(alpha-L-fucosyl)-L-threonyl-[EGF-like domain protein] + UDP-N-acetyl-alpha-D-glucosamine = 3-O-(N-acetyl-beta-D-glucosaminyl-(1-&gt;3)-alpha-L-fucosyl)-L-threonyl-[EGF-like domain protein] + UDP + H(+). The enzyme catalyses 3-O-(alpha-L-fucosyl)-L-seryl-[EGF-like domain protein] + UDP-N-acetyl-alpha-D-glucosamine = 3-O-(N-acetyl-beta-D-glucosaminyl-(1-&gt;3)-alpha-L-fucosyl)-L-seryl-[EGF-like domain protein] + UDP + H(+). Glycosyltransferase that initiates the elongation of O-linked fucose residues attached to EGF-like repeats in the extracellular domain of Notch molecules. Essential mediator of somite segmentation and patterning. This is Beta-1,3-N-acetylglucosaminyltransferase lunatic fringe (LFNG) from Gallus gallus (Chicken).